Consider the following 242-residue polypeptide: Carboxy-S-adenosyl-L-methionine synthase (242 aa).

Residues tyrosine 39, 64–66 (GCS), 89–90 (DN), 117–118 (DI), asparagine 132, and arginine 199 each bind S-adenosyl-L-methionine.

Belongs to the class I-like SAM-binding methyltransferase superfamily. Cx-SAM synthase family. As to quaternary structure, homodimer.

It carries out the reaction prephenate + S-adenosyl-L-methionine = carboxy-S-adenosyl-L-methionine + 3-phenylpyruvate + H2O. In terms of biological role, catalyzes the conversion of S-adenosyl-L-methionine (SAM) to carboxy-S-adenosyl-L-methionine (Cx-SAM). The polypeptide is Carboxy-S-adenosyl-L-methionine synthase (Aliivibrio salmonicida (strain LFI1238) (Vibrio salmonicida (strain LFI1238))).